A 627-amino-acid chain; its full sequence is ATP-dependent zinc metalloprotease FtsH 2 (627 aa).

The Cytoplasmic portion of the chain corresponds to 1 to 7; sequence MKFSWRT. A helical membrane pass occupies residues 8–28; the sequence is ALLWSLPLLVVGFFFWQGSFG. Topologically, residues 29 to 117 are lumenal; sequence GADANLGSNT…SHPVRNNGMV (89 aa). The helical transmembrane segment at 118–138 threads the bilayer; the sequence is WGFVGNLIFPVLLIASLFFLF. Over 139-627 the chain is Cytoplasmic; that stretch reads RRSSNMPGGP…PVKEQLIPQL (489 aa). 212-219 is an ATP binding site; the sequence is GPPGTGKT. A Zn(2+)-binding site is contributed by histidine 433. The active site involves glutamate 434. Zn(2+) contacts are provided by histidine 437 and aspartate 511.

In the central section; belongs to the AAA ATPase family. The protein in the C-terminal section; belongs to the peptidase M41 family. In terms of assembly, homohexamer (Potential). Part of a large (&gt;500 kDa) complex that includes FtsH3 and PSII. Coimmunoprecipitates with YidC. The cofactor is Zn(2+).

It is found in the cellular thylakoid membrane. Its function is as follows. Acts as a processive, ATP-dependent zinc metallopeptidase for both cytoplasmic and membrane proteins. Plays a role in the quality control of integral membrane proteins. In terms of biological role, plays a role in the selective replacement of photosystem II (PSII) protein D1 in the PSII repair cycle following visible-light and UV-B induced damage. If damaged D1 is not removed then new D1 cannot be inserted to restore the PSII reaction center. Seems to also degrade damaged and/or unassembled PSII proteins D2 and PsbB (CP47). May recognize D1 via its first 20 amino acids, as deletion of these prevents the PSII repair cycle. Also seems to degrade cytoplasmic GGPS, glucosylglycerol-phosphate synthase. The sequence is that of ATP-dependent zinc metalloprotease FtsH 2 (ftsH2) from Synechocystis sp. (strain ATCC 27184 / PCC 6803 / Kazusa).